We begin with the raw amino-acid sequence, 733 residues long: Cell division cycle protein 48 homolog AF_1297 (733 aa).

ATP is bound by residues 223-230 (GPPGTGKT) and 496-503 (GPPGTGKT).

This sequence belongs to the AAA ATPase family. CDC48 subfamily.

This chain is Cell division cycle protein 48 homolog AF_1297, found in Archaeoglobus fulgidus (strain ATCC 49558 / DSM 4304 / JCM 9628 / NBRC 100126 / VC-16).